Consider the following 448-residue polypeptide: Serine--tRNA ligase (448 aa).

Position 246-248 (246-248 (TAE)) interacts with L-serine. Residues 277–279 (RKE) and valine 293 contribute to the ATP site. Glutamate 300 is an L-serine binding site. Residue 364–367 (ELAS) participates in ATP binding. Threonine 399 contributes to the L-serine binding site.

The protein belongs to the class-II aminoacyl-tRNA synthetase family. Type-1 seryl-tRNA synthetase subfamily. In terms of assembly, homodimer. The tRNA molecule binds across the dimer.

It localises to the cytoplasm. It catalyses the reaction tRNA(Ser) + L-serine + ATP = L-seryl-tRNA(Ser) + AMP + diphosphate + H(+). The catalysed reaction is tRNA(Sec) + L-serine + ATP = L-seryl-tRNA(Sec) + AMP + diphosphate + H(+). Its pathway is aminoacyl-tRNA biosynthesis; selenocysteinyl-tRNA(Sec) biosynthesis; L-seryl-tRNA(Sec) from L-serine and tRNA(Sec): step 1/1. Functionally, catalyzes the attachment of serine to tRNA(Ser). Is also able to aminoacylate tRNA(Sec) with serine, to form the misacylated tRNA L-seryl-tRNA(Sec), which will be further converted into selenocysteinyl-tRNA(Sec). The protein is Serine--tRNA ligase of Pyrobaculum islandicum (strain DSM 4184 / JCM 9189 / GEO3).